We begin with the raw amino-acid sequence, 281 residues long: Spermatogenesis-associated serine-rich protein 1 (281 aa).

Over residues 1-14 (MEAARDAQHSDVLE) the composition is skewed to basic and acidic residues. The tract at residues 1-92 (MEAARDAQHS…SSSAQANRSL (92 aa)) is disordered. Residues 21-37 (SRTSSHQNRRASLSSDG) are compositionally biased toward polar residues. Phosphothreonine is present on Thr53. Positions 54–65 (PSDTASGLGQKT) are enriched in polar residues. Residues 66–85 (SSTSSSSSSSSSSSPSSSSS) are compositionally biased toward low complexity. Residues Ser71, Ser74, Ser77, Ser78, Ser79, and Ser91 each carry the phosphoserine modification.

Detected in pachytene spermatocytes and round spermatids.

The polypeptide is Spermatogenesis-associated serine-rich protein 1 (Spats1) (Rattus norvegicus (Rat)).